The sequence spans 123 residues: Ribosome-binding factor A (123 aa).

It belongs to the RbfA family. In terms of assembly, monomer. Binds 30S ribosomal subunits, but not 50S ribosomal subunits or 70S ribosomes.

The protein localises to the cytoplasm. In terms of biological role, one of several proteins that assist in the late maturation steps of the functional core of the 30S ribosomal subunit. Associates with free 30S ribosomal subunits (but not with 30S subunits that are part of 70S ribosomes or polysomes). Required for efficient processing of 16S rRNA. May interact with the 5'-terminal helix region of 16S rRNA. This chain is Ribosome-binding factor A, found in Chlamydia trachomatis serovar A (strain ATCC VR-571B / DSM 19440 / HAR-13).